Here is a 131-residue protein sequence, read N- to C-terminus: D-ribose pyranase (131 aa).

The active-site Proton donor is the H20. Residues D28, H98, and Y120 to N122 contribute to the substrate site.

This sequence belongs to the RbsD / FucU family. RbsD subfamily. In terms of assembly, homodecamer.

It localises to the cytoplasm. The enzyme catalyses beta-D-ribopyranose = beta-D-ribofuranose. It participates in carbohydrate metabolism; D-ribose degradation; D-ribose 5-phosphate from beta-D-ribopyranose: step 1/2. Catalyzes the interconversion of beta-pyran and beta-furan forms of D-ribose. In Clostridium perfringens (strain SM101 / Type A), this protein is D-ribose pyranase.